We begin with the raw amino-acid sequence, 1429 residues long: MALQVLIAHTGLRLEVDTAQFSILDDLKTWVSKKTSIPPQHIVALNPHGRTVKITNLHTEKEIFVYDIRISSPGNTNLITPIPLPKRYAVPNAPNTIDDVQSITSWQELYKDRRNWAMRLVEDSGQMSSATLARYSEIDVIIKCLDAAVANLEISIKQIEPKYNDLKKWVAPALEEHGNLVERWEQYLDLAKSTPVSPSMVKFMTGREINKARPTLEDLIELDTAKKAGKLAPTAHRRFSDKANQLGNTASQMYQSLESLIANFETLMSRSALSHSTDSAQLLEDIEAVVKQMDSDYRAALGYGNTQRDVAQASKTASVHTEHLVPTLKKRVKEMEELLHYGTDARNSVASESAKFMRHVTEITSLHSNVKSQINVLNQSEDDMTTFDYLRLIHQLPYMYAAFVAEAVRRREWVDKVKTDSSTLANEMALFQDEESKRRRKWQKMIGSMYGPDLDTNVMGLEVNLLGEDTPWPALTKEDLTDFIQILQEQPVDQTVLDDIVKLVQELDSPTKQQSKRLKAFKNGSIHEAALGRSGLMIRGDDDLLQSLQEDKGKLENKLKTAESRVRRLEDLLHRQSQASRPGNLFQPQGSQQRERVNSASSVRSSRFDDRRRSSEGIDPLMRRITQLENELREEKQRSVNLQQELTTQSNNHEDVKGQHEDLKAQHEDLKGQMAEINTTKQDLLENMEALEREFVEERKNLEIEIKTLKARLEDTEDEIEQFDESRQHEKAGLVVRVEELEAELEQVNKQRQDDALKAQGQVEFLRKETRIQREQQEALEQQIQSAQEEVQNVSRKLSVAEEALDDHWQALTRLFSELSPDGTIPDNVVDLSNLLLTQAGTLVEKSRNSEADIELLKTQVEHFSSAISELREQVSQKDAKLSEDEMTVIHLRENIAEEQAKVSALEQELADGREQLTELRAKLSDGETGPEALQTRLEDEEKKVMTLTEEVASKQSHVGSLEEELRMFQEKVESLQGKISHMNSHYEHRDEKTKDLTQRLYSQNDRMCRLLERVGYAVTRKDGEMTVNKIPRAERNAQNLADSTDPSASIRKSGTLSRVLGDSVDLELLYWFNNSDMQAEDEKYEEFMNNLGKFDMELFSETVYRRIKEVEHMARKWQKEARSYRERAHILQKDSHEKIAFKHFREGDLALFLPTRNQQAGAWAAFNVGFPHYFLREQDAHRLRHREWLVARISRIQERVVDLSKSLQPSSETESINDEENDNPFQLSDGLHWYLIDALEDKPGAPSTPGMGKSTVAANTVEATANIHAHGVGGKGKSRESVTSIEGINKTLSKSLESRRSSTNSKKALPFQLGGTTLLKNSALASETNSLRAHNADTPSGTSPTQGGHLTSTNASLGQKNQRVDGPIRQPSDESSTQGGGAKADEQPRSVVQREDSVESPTRRSVVWDSLWSVDYNYESGSRRWLGG.

Coiled-coil stretches lie at residues 540–579 (GDDD…QSQA), 616–808 (EGID…LDDH), 842–985 (TLVE…HMNS), and 1106–1135 (RRIK…LQKD). Positions 574–622 (HRQSQASRPGNLFQPQGSQQRERVNSASSVRSSRFDDRRRSSEGIDPLM) are disordered. Over residues 575 to 592 (RQSQASRPGNLFQPQGSQ) the composition is skewed to polar residues. Residues 606–616 (SRFDDRRRSSE) show a composition bias toward basic and acidic residues. Disordered stretches follow at residues 1205–1224 (SKSL…ENDN) and 1333–1405 (RAHN…PTRR). 2 stretches are compositionally biased toward polar residues: residues 1206-1215 (KSLQPSSETE) and 1333-1362 (RAHN…GQKN). The span at 1384 to 1398 (KADEQPRSVVQREDS) shows a compositional bias: basic and acidic residues.

The protein belongs to the ATG11 family. As to quaternary structure, homodimer and potential homooligomers. Interacts with ATG1 kinase and the ATG19 and ATG34 cargo protein transporters. Interacts with ATG9, ATG17 and ATG20.

The protein resides in the preautophagosomal structure membrane. It localises to the vacuole membrane. Functionally, involved in cytoplasm to vacuole transport (Cvt), pexophagy, mitophagy and nucleophagy. Recruits mitochondria for their selective degradation via autophagy (mitophagy) during starvation, through its interaction with ATG32. Works as scaffold proteins that recruit ATG proteins to the pre-autophagosome (PAS), the site of vesicle/autophagosome formation. Required for ATG9 anterograde transport from the mitochondria to the PAS. Also recruits the ATG19-prAPE1 complex to the PAS. Required for the Cvt vesicles completion. Autophagy is required for proper vegetative growth, asexual/sexual reproduction, and full virulence. Autophagy is particularly involved in the biosynthesis of deoxynivalenol (DON), an important virulence determinant. This Gibberella zeae (strain ATCC MYA-4620 / CBS 123657 / FGSC 9075 / NRRL 31084 / PH-1) (Wheat head blight fungus) protein is Autophagy-related protein 11.